Consider the following 626-residue polypeptide: Pheromone B alpha 3 receptor (626 aa).

The next 7 membrane-spanning stretches (helical) occupy residues 8 to 28 (LFPT…PWHL), 36 to 56 (CFFM…SIVW), 70 to 90 (ISIR…LCII), 113 to 133 (IIID…MQYI), 163 to 183 (IWPV…LIEF), 208 to 228 (LMAL…FVIV), and 271 to 291 (ELTR…FGFA). Disordered regions lie at residues 363–409 (KQYT…SSPI), 481–509 (ATFT…SSSA), 524–549 (STTD…RLPS), and 571–626 (QDVA…RASV). A compositionally biased stretch (low complexity) spans 376-391 (SSSGFSSSESTRFGSS). Over residues 574–606 (ATGTAAPTTTAPAPASTTIAPATTTATAPTTTA) the composition is skewed to low complexity.

Belongs to the G-protein coupled receptor 4 family.

The protein localises to the membrane. Receptor for the BAP3 pheromone, a prenylated mating factor. This chain is Pheromone B alpha 3 receptor (BAR3), found in Schizophyllum commune (strain H4-8 / FGSC 9210) (Split gill fungus).